The chain runs to 217 residues: Thiamine-phosphate synthase (217 aa).

Residues Gln-41–Lys-45 and Asn-76 each bind 4-amino-2-methyl-5-(diphosphooxymethyl)pyrimidine. Mg(2+) contacts are provided by Asp-77 and Asp-96. Ser-115 is a binding site for 4-amino-2-methyl-5-(diphosphooxymethyl)pyrimidine. Ser-142–Ser-144 is a binding site for 2-[(2R,5Z)-2-carboxy-4-methylthiazol-5(2H)-ylidene]ethyl phosphate. Lys-145 is a 4-amino-2-methyl-5-(diphosphooxymethyl)pyrimidine binding site. Residues Gly-172 and Ile-192–Ser-193 each bind 2-[(2R,5Z)-2-carboxy-4-methylthiazol-5(2H)-ylidene]ethyl phosphate.

The protein belongs to the thiamine-phosphate synthase family. Mg(2+) serves as cofactor.

The enzyme catalyses 2-[(2R,5Z)-2-carboxy-4-methylthiazol-5(2H)-ylidene]ethyl phosphate + 4-amino-2-methyl-5-(diphosphooxymethyl)pyrimidine + 2 H(+) = thiamine phosphate + CO2 + diphosphate. It catalyses the reaction 2-(2-carboxy-4-methylthiazol-5-yl)ethyl phosphate + 4-amino-2-methyl-5-(diphosphooxymethyl)pyrimidine + 2 H(+) = thiamine phosphate + CO2 + diphosphate. The catalysed reaction is 4-methyl-5-(2-phosphooxyethyl)-thiazole + 4-amino-2-methyl-5-(diphosphooxymethyl)pyrimidine + H(+) = thiamine phosphate + diphosphate. It participates in cofactor biosynthesis; thiamine diphosphate biosynthesis; thiamine phosphate from 4-amino-2-methyl-5-diphosphomethylpyrimidine and 4-methyl-5-(2-phosphoethyl)-thiazole: step 1/1. Functionally, condenses 4-methyl-5-(beta-hydroxyethyl)thiazole monophosphate (THZ-P) and 2-methyl-4-amino-5-hydroxymethyl pyrimidine pyrophosphate (HMP-PP) to form thiamine monophosphate (TMP). The protein is Thiamine-phosphate synthase of Acidithiobacillus ferrooxidans (strain ATCC 23270 / DSM 14882 / CIP 104768 / NCIMB 8455) (Ferrobacillus ferrooxidans (strain ATCC 23270)).